The following is a 459-amino-acid chain: ATP-dependent protease ATPase subunit HslU (459 aa).

ATP is bound by residues V18, 60–65 (GVGKTE), D272, E337, and R409.

This sequence belongs to the ClpX chaperone family. HslU subfamily. As to quaternary structure, a double ring-shaped homohexamer of HslV is capped on each side by a ring-shaped HslU homohexamer. The assembly of the HslU/HslV complex is dependent on binding of ATP.

It localises to the cytoplasm. Its function is as follows. ATPase subunit of a proteasome-like degradation complex; this subunit has chaperone activity. The binding of ATP and its subsequent hydrolysis by HslU are essential for unfolding of protein substrates subsequently hydrolyzed by HslV. HslU recognizes the N-terminal part of its protein substrates and unfolds these before they are guided to HslV for hydrolysis. This chain is ATP-dependent protease ATPase subunit HslU, found in Thermoanaerobacter sp. (strain X514).